We begin with the raw amino-acid sequence, 93 residues long: C-C motif chemokine 3 (93 aa).

Residues 1–24 form the signal peptide; the sequence is MKVAVAALAVLLCAMALCSQVFSA. Intrachain disulfides connect Cys-34–Cys-58 and Cys-35–Cys-74.

Belongs to the intercrine beta (chemokine CC) family. Self-associates. Also heterodimer of MIP-1-alpha(4-69) and MIP-1-beta(3-69). Interacts with CCR1.

It localises to the secreted. Its function is as follows. Monokine with inflammatory and chemokinetic properties. Binds to CCR1, CCR4 and CCR5. One of the major HIV-suppressive factors produced by CD8+ T-cells. Recombinant MIP-1-alpha induces a dose-dependent inhibition of different strains of HIV-1, HIV-2, and simian immunodeficiency virus (SIV). This chain is C-C motif chemokine 3 (CCL3), found in Bos taurus (Bovine).